A 273-amino-acid chain; its full sequence is Putative phosphoenolpyruvate synthase regulatory protein (273 aa).

153-160 (GVSRSGKT) contacts ADP.

Belongs to the pyruvate, phosphate/water dikinase regulatory protein family. PSRP subfamily.

The enzyme catalyses [pyruvate, water dikinase] + ADP = [pyruvate, water dikinase]-phosphate + AMP + H(+). It catalyses the reaction [pyruvate, water dikinase]-phosphate + phosphate + H(+) = [pyruvate, water dikinase] + diphosphate. In terms of biological role, bifunctional serine/threonine kinase and phosphorylase involved in the regulation of the phosphoenolpyruvate synthase (PEPS) by catalyzing its phosphorylation/dephosphorylation. The polypeptide is Putative phosphoenolpyruvate synthase regulatory protein (Delftia acidovorans (strain DSM 14801 / SPH-1)).